Reading from the N-terminus, the 316-residue chain is Apolipoprotein E (316 aa).

A signal peptide spans 1 to 18 (MKVLWAALVVTLLAGCGA). 8 consecutive repeat copies span residues 83-104 (ALMDDTMKEVKACKSELEEQLG), 105-126 (PVTEETKARVSKELQAAQARLG), 127-148 (ADMEEVRSRLAQYRGELQAMVG), 149-170 (QSTEELRGRLSAHLRKLRKRLL), 171-192 (RDAEDLQRRLAVYQAGIREGAA), 193-214 (RSVNTLREHLGPLAEQAATVHT), 215-232 (LVSKPLQERAEAWAQRLR), and 233-254 (GRLEKAGFPVGDRLDEVREQVQ). Residues 83-254 (ALMDDTMKEV…RLDEVREQVQ (172 aa)) are 8 X 22 AA approximate tandem repeats. The LDL and other lipoprotein receptors binding stretch occupies residues 161-171 (HLRKLRKRLLR). 165–168 (LRKR) provides a ligand contact to heparin. Residues 213–289 (HTLVSKPLQE…SWFEPLVQDM (77 aa)) form a lipid-binding and lipoprotein association region. Position 228–235 (228–235 (AQRLRGRL)) interacts with heparin. The tract at residues 265–316 (NQVRLQAEAFQGRLKSWFEPLVQDMQQKWAELVEKVQLAVGAVPTSVPSEKQ) is homooligomerization. The segment at 277–289 (RLKSWFEPLVQDM) is specificity for association with VLDL.

It belongs to the apolipoprotein A1/A4/E family. In terms of assembly, homotetramer. May interact with ABCA1; functionally associated with ABCA1 in the biogenesis of HDLs. May interact with APP/A4 amyloid-beta peptide; the interaction is extremely stable in vitro but its physiological significance is unclear. May interact with MAPT. May interact with MAP2. In the cerebrospinal fluid, interacts with secreted SORL1. Interacts with PMEL; this allows the loading of PMEL luminal fragment on ILVs to induce fibril nucleation. APOE exists as multiple glycosylated and sialylated glycoforms within cells and in plasma. The extent of glycosylation and sialylation are tissue and context specific. Post-translationally, glycated in plasma VLDL. In terms of processing, phosphorylated by FAM20C in the extracellular medium.

The protein resides in the secreted. It localises to the extracellular space. Its subcellular location is the extracellular matrix. The protein localises to the extracellular vesicle. It is found in the endosome. The protein resides in the multivesicular body. In terms of biological role, APOE is an apolipoprotein, a protein associating with lipid particles, that mainly functions in lipoprotein-mediated lipid transport between organs via the plasma and interstitial fluids. APOE is a core component of plasma lipoproteins and is involved in their production, conversion and clearance. Apolipoproteins are amphipathic molecules that interact both with lipids of the lipoprotein particle core and the aqueous environment of the plasma. As such, APOE associates with chylomicrons, chylomicron remnants, very low density lipoproteins (VLDL) and intermediate density lipoproteins (IDL) but shows a preferential binding to high-density lipoproteins (HDL). It also binds a wide range of cellular receptors including the LDL receptor/LDLR and the very low-density lipoprotein receptor/VLDLR that mediate the cellular uptake of the APOE-containing lipoprotein particles. Finally, APOE also has a heparin-binding activity and binds heparan-sulfate proteoglycans on the surface of cells, a property that supports the capture and the receptor-mediated uptake of APOE-containing lipoproteins by cells. This chain is Apolipoprotein E (APOE), found in Diceros bicornis (Black rhinoceros).